The chain runs to 134 residues: Small ribosomal subunit protein uS8c (134 aa).

The protein belongs to the universal ribosomal protein uS8 family. Part of the 30S ribosomal subunit.

The protein resides in the plastid. The protein localises to the chloroplast. One of the primary rRNA binding proteins, it binds directly to 16S rRNA central domain where it helps coordinate assembly of the platform of the 30S subunit. In Helianthus annuus (Common sunflower), this protein is Small ribosomal subunit protein uS8c (rps8).